We begin with the raw amino-acid sequence, 457 residues long: uncharacterized protein (457 aa).

This is an uncharacterized protein from Synechocystis sp. (strain ATCC 27184 / PCC 6803 / Kazusa).